The chain runs to 1007 residues: Protein vav-1 (1007 aa).

Residues 37-151 (CDLWIGCARW…TLSFLSHTKE (115 aa)) enclose the Calponin-homology (CH) domain. Residues 151-239 (ESLSRGVDPF…ENDLQNTPTL (89 aa)) form an AC region. The disordered stretch occupies residues 153 to 176 (LSRGVDPFPDTDNNQEGTSNGSEF). Residues 163-174 (TDNNQEGTSNGS) are compositionally biased toward polar residues. Phosphotyrosine occurs at positions 183, 200, and 217. Residues 240-437 (KRNRCIRELY…EDVCNYINEE (198 aa)) form the DH domain. A PH domain is found at 470 to 598 (RVNLDGEVKM…WMTALLLSKS (129 aa)). The Phorbol-ester/DAG-type zinc finger occupies 610-664 (NHKVAFHSFRVDVKNPATCDVCDKLMKGLQYQGYKCESCNMSMHKECLGLKKCEA). The region spanning 688-750 (HEGDIVVANS…HLDHVSQSRT (63 aa)) is the SH3 1 domain. The disordered stretch occupies residues 778–817 (LPNKLLSDGSSRSLSGPHGSRSSRNSSSSTINGSMDSVPR). A compositionally biased stretch (low complexity) spans 782-814 (LLSDGSSRSLSGPHGSRSSRNSSSSTINGSMDS). One can recognise an SH2 domain in the interval 831 to 925 (WYMGEMERAK…ALDTCLKNPY (95 aa)). The region spanning 926-991 (SQCKVFKAVH…PLSYVKPYDP (66 aa)) is the SH3 2 domain.

GEF activity is regulated by phosphorylation on tyrosine residues. In terms of tissue distribution, strong expression in the pharynx, proximal gonad, spermatheca, intestine and rectal epithelia.

Functionally, acts as a guanine nucleotide exchange factor (GEF) for Rho GTPase. Has a critical roles in the generation of rhythmic behaviors: feeding, defecation and ovulation by dynamically regulating the concentration of intracellular calcium. Plays a role in male tail tip morphogenesis. The sequence is that of Protein vav-1 from Caenorhabditis elegans.